A 532-amino-acid chain; its full sequence is Phosphoenolpyruvate carboxykinase (ATP) (532 aa).

Substrate-binding residues include Arg-60, Tyr-200, and Lys-206. ATP contacts are provided by residues Lys-206, His-225, and 242–250; that span reads GLSGTGKTT. The Mn(2+) site is built by Lys-206 and His-225. Ser-244 contacts substrate. Mn(2+) is bound at residue Asp-263. Residues Glu-291, Arg-327, 443–444, and Thr-449 each bind ATP; that span reads RI. Arg-327 contributes to the substrate binding site.

It belongs to the phosphoenolpyruvate carboxykinase (ATP) family. Monomer. Mn(2+) serves as cofactor.

The protein resides in the cytoplasm. The enzyme catalyses oxaloacetate + ATP = phosphoenolpyruvate + ADP + CO2. It functions in the pathway carbohydrate biosynthesis; gluconeogenesis. With respect to regulation, inhibited by p-chloromercuribenzoate. Functionally, involved in gluconeogenesis. Catalyzes the conversion of oxaloacetate (OAA) to phosphoenolpyruvate (PEP) through direct phosphoryl transfer between the nucleoside triphosphate and OAA. The protein is Phosphoenolpyruvate carboxykinase (ATP) of Anaerobiospirillum succiniciproducens.